The primary structure comprises 372 residues: UDP-N-acetylglucosamine--N-acetylmuramyl-(pentapeptide) pyrophosphoryl-undecaprenol N-acetylglucosamine transferase (372 aa).

UDP-N-acetyl-alpha-D-glucosamine is bound by residues 10 to 12 (TGG), Asn-124, Arg-166, Ser-196, Ile-256, and Gln-301.

This sequence belongs to the glycosyltransferase 28 family. MurG subfamily.

It is found in the cell membrane. The enzyme catalyses di-trans,octa-cis-undecaprenyl diphospho-N-acetyl-alpha-D-muramoyl-L-alanyl-D-glutamyl-meso-2,6-diaminopimeloyl-D-alanyl-D-alanine + UDP-N-acetyl-alpha-D-glucosamine = di-trans,octa-cis-undecaprenyl diphospho-[N-acetyl-alpha-D-glucosaminyl-(1-&gt;4)]-N-acetyl-alpha-D-muramoyl-L-alanyl-D-glutamyl-meso-2,6-diaminopimeloyl-D-alanyl-D-alanine + UDP + H(+). It functions in the pathway cell wall biogenesis; peptidoglycan biosynthesis. In terms of biological role, cell wall formation. Catalyzes the transfer of a GlcNAc subunit on undecaprenyl-pyrophosphoryl-MurNAc-pentapeptide (lipid intermediate I) to form undecaprenyl-pyrophosphoryl-MurNAc-(pentapeptide)GlcNAc (lipid intermediate II). This chain is UDP-N-acetylglucosamine--N-acetylmuramyl-(pentapeptide) pyrophosphoryl-undecaprenol N-acetylglucosamine transferase, found in Desulforamulus reducens (strain ATCC BAA-1160 / DSM 100696 / MI-1) (Desulfotomaculum reducens).